The following is a 380-amino-acid chain: Cytochrome b (380 aa).

A run of 4 helical transmembrane segments spans residues 34–54 (FGSL…LLAM), 78–99 (WLIR…YLHI), 114–134 (WNIG…GYVL), and 179–199 (FFAL…VHLT). The heme b site is built by His-84 and His-98. Residues His-183 and His-197 each coordinate heme b. His-202 lines the a ubiquinone pocket. Helical transmembrane passes span 227-247 (IKDM…ALFS), 289-309 (LGGV…PLLH), 321-341 (LLPF…WVGS), and 348-368 (FIII…VLFP).

The protein belongs to the cytochrome b family. As to quaternary structure, the cytochrome bc1 complex contains 11 subunits: 3 respiratory subunits (MT-CYB, CYC1 and UQCRFS1), 2 core proteins (UQCRC1 and UQCRC2) and 6 low-molecular weight proteins (UQCRH/QCR6, UQCRB/QCR7, UQCRQ/QCR8, UQCR10/QCR9, UQCR11/QCR10 and a cleavage product of UQCRFS1). This cytochrome bc1 complex then forms a dimer. It depends on heme b as a cofactor.

It localises to the mitochondrion inner membrane. In terms of biological role, component of the ubiquinol-cytochrome c reductase complex (complex III or cytochrome b-c1 complex) that is part of the mitochondrial respiratory chain. The b-c1 complex mediates electron transfer from ubiquinol to cytochrome c. Contributes to the generation of a proton gradient across the mitochondrial membrane that is then used for ATP synthesis. The protein is Cytochrome b (MT-CYB) of Gymnorhina tibicen (Australian magpie).